The chain runs to 133 residues: ATP synthase epsilon chain (133 aa).

This sequence belongs to the ATPase epsilon chain family. F-type ATPases have 2 components, CF(1) - the catalytic core - and CF(0) - the membrane proton channel. CF(1) has five subunits: alpha(3), beta(3), gamma(1), delta(1), epsilon(1). CF(0) has three main subunits: a, b and c.

It localises to the cell membrane. Its function is as follows. Produces ATP from ADP in the presence of a proton gradient across the membrane. This Bacillus anthracis (strain A0248) protein is ATP synthase epsilon chain.